Reading from the N-terminus, the 437-residue chain is Proline--tRNA ligase (437 aa).

The protein belongs to the class-II aminoacyl-tRNA synthetase family. ProS type 2 subfamily. Homodimer.

The protein resides in the cytoplasm. It carries out the reaction tRNA(Pro) + L-proline + ATP = L-prolyl-tRNA(Pro) + AMP + diphosphate. In terms of biological role, catalyzes the attachment of proline to tRNA(Pro) in a two-step reaction: proline is first activated by ATP to form Pro-AMP and then transferred to the acceptor end of tRNA(Pro). This chain is Proline--tRNA ligase, found in Rhizorhabdus wittichii (strain DSM 6014 / CCUG 31198 / JCM 15750 / NBRC 105917 / EY 4224 / RW1) (Sphingomonas wittichii).